A 297-amino-acid polypeptide reads, in one-letter code: Ketohexokinase (297 aa).

Beta-D-fructose contacts are provided by Asp-15, Gly-41, Asn-42, and Asn-45. Residues Arg-107, 225–228, and 254–257 each bind ATP; these read AEEG and GAGD. A beta-D-fructose-binding site is contributed by Asp-257.

This sequence belongs to the carbohydrate kinase PfkB family. Homodimer.

The enzyme catalyses beta-D-fructose + ATP = beta-D-fructose 1-phosphate + ADP + H(+). It participates in carbohydrate metabolism; fructose metabolism. Its activity is regulated as follows. Requires potassium. Inhibition by ADP. Functionally, catalyzes the phosphorylation of the ketose sugar fructose to fructose-1-phosphate. The polypeptide is Ketohexokinase (KHK) (Pongo abelii (Sumatran orangutan)).